The sequence spans 262 residues: Short-chain reductase protein NovJ (262 aa).

NADP(+) contacts are provided by residues 23–26 (GAGR) and 73–74 (DV). Residue Ser152 coordinates substrate. Tyr164 acts as the Proton acceptor in catalysis. 164-168 (YATAK) contacts NADP(+).

Belongs to the short-chain dehydrogenases/reductases (SDR) family. In terms of assembly, heterotetramer; the NovJ(2)K(2) heterotetramer is composed of subunits of 2 NovJ and 2 subunits of NovK.

Its pathway is antibiotic biosynthesis; novobiocin biosynthesis. Functionally, catalytic subunit of the NovJ(2)K(2) heterotetramer that catalyzes the NADPH-dependent reduction of the tyrosyl moiety of L-beta-OH-Tyr-S-NovH intermediate to yield the tethered beta-ketotyrosyl-S-NovH in the novobiocin biosynthesis pathway. Novobiocin is an aminocoumarin family antibiotic that targets bacterial DNA gyrases. This chain is Short-chain reductase protein NovJ (novJ), found in Streptomyces niveus (Streptomyces spheroides).